Reading from the N-terminus, the 394-residue chain is Teichoic acid poly(glycerol phosphate) polymerase (394 aa).

Belongs to the CDP-glycerol glycerophosphotransferase family.

The protein localises to the cell membrane. It catalyses the reaction 4-O-[(2R)-glycerylphospho]-N-acetyl-beta-D-mannosaminyl-(1-&gt;4)-N-acetyl-alpha-D-glucosaminyl di-trans,octa-cis-undecaprenyl diphosphate + n CDP-glycerol = 4-O-{[(2R)-1-glycerylphospho](n)-(2R)-1-glycerylphospho}-N-acetyl-beta-D-mannosaminyl-(1-&gt;4)-N-acetyl-alpha-D-glucosaminyl undecaprenyl diphosphate + n CMP + n H(+). Catalyzes the addition of further 2-8 glycerol phosphate units from CDP-glycerol to the single glycerol phosphate unit bound to the prenolpyrophosphate-linked disaccharide. The function in the cell is unknown since the product is not part of the poly(ribitol phosphate) teichoic acid found in the cell walls. This Bacillus spizizenii (strain ATCC 23059 / NRRL B-14472 / W23) (Bacillus subtilis subsp. spizizenii) protein is Teichoic acid poly(glycerol phosphate) polymerase (tarF).